The following is a 645-amino-acid chain: ATP-dependent zinc metalloprotease FtsH 1 (645 aa).

Residues Met1–Lys6 are Cytoplasmic-facing. Residues Thr7 to Ser27 form a helical membrane-spanning segment. Over Lys28–Phe110 the chain is Periplasmic. The chain crosses the membrane as a helical span at residues Phe111–Ile131. Residues Met132 to Ile645 are Cytoplasmic-facing. Gly203–Thr210 contributes to the ATP binding site. A Zn(2+)-binding site is contributed by His425. Residue Glu426 is part of the active site. Zn(2+)-binding residues include His429 and Asp501.

It in the central section; belongs to the AAA ATPase family. The protein in the C-terminal section; belongs to the peptidase M41 family. As to quaternary structure, homohexamer. Zn(2+) serves as cofactor.

It is found in the cell inner membrane. Acts as a processive, ATP-dependent zinc metallopeptidase for both cytoplasmic and membrane proteins. Plays a role in the quality control of integral membrane proteins. This chain is ATP-dependent zinc metalloprotease FtsH 1, found in Bdellovibrio bacteriovorus (strain ATCC 15356 / DSM 50701 / NCIMB 9529 / HD100).